A 208-amino-acid polypeptide reads, in one-letter code: Small ribosomal subunit protein uS4 (208 aa).

An S4 RNA-binding domain is found at 98 to 158 (GRLDNVVYRM…EKSKKQARIK (61 aa)).

Belongs to the universal ribosomal protein uS4 family. In terms of assembly, part of the 30S ribosomal subunit. Contacts protein S5. The interaction surface between S4 and S5 is involved in control of translational fidelity.

One of the primary rRNA binding proteins, it binds directly to 16S rRNA where it nucleates assembly of the body of the 30S subunit. Functionally, with S5 and S12 plays an important role in translational accuracy. This Actinobacillus pleuropneumoniae serotype 5b (strain L20) protein is Small ribosomal subunit protein uS4.